The following is a 238-amino-acid chain: Protein LicA homolog (238 aa).

Belongs to the peptidase S49 family.

The sequence is that of Protein LicA homolog (licA) from Mycoplasma capricolum subsp. capricolum (strain California kid / ATCC 27343 / NCTC 10154).